Here is a 3135-residue protein sequence, read N- to C-terminus: Beauvericin nonribosomal cyclodepsipeptide synthetase BEA1 (3135 aa).

The condensation 1 stretch occupies residues 70-458 (HVAYEISNDI…QRLRGSPDKL (389 aa)). The segment at 196 to 228 (LSNRPYTPESSDPEDDGLSLTPTDGSKTPETEG) is disordered. The tract at residues 499-896 (SLSPSKVAIC…GRMDSQVKIR (398 aa)) is adenylation 1. Residues 1021 to 1097 (STTTSSQSKL…GLEAIVNGSA (77 aa)) form the Carrier 1 domain. Serine 1058 carries the O-(pantetheine 4'-phosphoryl)serine modification. The segment at 1115–1542 (SYSQGRLWFL…NIPISVLPLT (428 aa)) is condensation 2. Residues 1571–1974 (FRTQVAAYPD…GRMDTQFKIR (404 aa)) are adenylation 2. Positions 2042–2182 (MYADIGDIDP…FPSPEYLAQV (141 aa)) are S-adenosyl-L-methionine-dependent N-methyltransferase. Carrier domains lie at 2509–2583 (VPIS…REGL) and 2603–2677 (APRT…ESTD). 2 positions are modified to O-(pantetheine 4'-phosphoryl)serine: serine 2543 and serine 2637. The tract at residues 2721-3127 (QDMYQSTQMQ…QYFLEEVCNT (407 aa)) is condensation 3.

Belongs to the NRP synthetase family.

It catalyses the reaction 3 (R)-2-hydroxy-3-methylbutanoate + 3 L-phenylalanine + 3 S-adenosyl-L-methionine + 6 ATP = beauvericin + 6 AMP + 3 S-adenosyl-L-homocysteine + 6 diphosphate + 6 H(+). Its function is as follows. Beauvericin nonribosomal cyclodepsipeptide synthetase; part of the gene cluster that mediates the biosynthesis of beauvericin (BEA), a non-ribosomal cyclic hexadepsipeptide that shows antibiotic, antifungal, insecticidal, and cancer cell antiproliferative and antihaptotactic activity. Ketoisovalerate reductase BEA2 catalyzes the NADPH-specific reduction of ketoisovaleric acid to hydroxyisovalerate, a precursor for beauvericin biosynthesis. The nonribosomal cyclodepsipeptide synthetase BEA1 then catalyzes the formation of beauvericin via condensation and cyclization of 3 dipeptidol monomers, each composed of one unit of hydroxyisovalerate and one unit of N-methyl-phenylalanine. The protein is Beauvericin nonribosomal cyclodepsipeptide synthetase BEA1 of Gibberella fujikuroi (strain CBS 195.34 / IMI 58289 / NRRL A-6831) (Bakanae and foot rot disease fungus).